A 156-amino-acid polypeptide reads, in one-letter code: ATP synthase subunit b (156 aa).

Residues 12-32 (VAFLIFVLFCMKYVWPPVITA) traverse the membrane as a helical segment.

Belongs to the ATPase B chain family. In terms of assembly, F-type ATPases have 2 components, F(1) - the catalytic core - and F(0) - the membrane proton channel. F(1) has five subunits: alpha(3), beta(3), gamma(1), delta(1), epsilon(1). F(0) has three main subunits: a(1), b(2) and c(10-14). The alpha and beta chains form an alternating ring which encloses part of the gamma chain. F(1) is attached to F(0) by a central stalk formed by the gamma and epsilon chains, while a peripheral stalk is formed by the delta and b chains.

The protein resides in the cell inner membrane. In terms of biological role, f(1)F(0) ATP synthase produces ATP from ADP in the presence of a proton or sodium gradient. F-type ATPases consist of two structural domains, F(1) containing the extramembraneous catalytic core and F(0) containing the membrane proton channel, linked together by a central stalk and a peripheral stalk. During catalysis, ATP synthesis in the catalytic domain of F(1) is coupled via a rotary mechanism of the central stalk subunits to proton translocation. Its function is as follows. Component of the F(0) channel, it forms part of the peripheral stalk, linking F(1) to F(0). This chain is ATP synthase subunit b, found in Pseudomonas putida (strain ATCC 47054 / DSM 6125 / CFBP 8728 / NCIMB 11950 / KT2440).